Here is a 98-residue protein sequence, read N- to C-terminus: Thrombin-like enzyme cerastotin (98 aa).

Positions 1 to 98 (VIGGAECNIN…IKKPVNGSTH (98 aa)) constitute a Peptidase S1 domain. Active-site charge relay system residues include His-41 and Asp-85. A glycan (N-linked (GlcNAc...) asparagine) is linked at Asn-94.

Belongs to the peptidase S1 family. Snake venom subfamily. As to quaternary structure, monomer. Expressed by the venom gland.

It localises to the secreted. Inhibited by PMSF. Functionally, thrombin-like snake venom serine protease that preferentially cleaves the alpha-chain of fibrinogen (FGA). Induce platelet aggregation in the presence of exogenous fibrinogen. Possesses esterase and amidolytic activities. In Cerastes cerastes (Horned desert viper), this protein is Thrombin-like enzyme cerastotin.